Reading from the N-terminus, the 281-residue chain is 3'-5' exonuclease Snipper (281 aa).

The tract at residues 19–52 (DGARPDPNNDPEESFNEDEVTEANSVPAKSKKSR) is disordered. Positions 27 to 39 (NDPEESFNEDEVT) are enriched in acidic residues. Residues 64–262 (YVIAVDFEAT…MCKMVRDGAL (199 aa)) form the Exonuclease domain. Mg(2+) contacts are provided by D69 and E71. E71 functions as the Proton acceptor in the catalytic mechanism. The AMP site is built by E71 and A72. D183 provides a ligand contact to Mg(2+). H240 acts as the Proton acceptor in catalysis. H240 provides a ligand contact to AMP. D245 is a Mg(2+) binding site.

It belongs to the ERI2 family. The cofactor is Mg(2+).

It localises to the cytoplasm. It is found in the nucleus. Its subcellular location is the nucleolus. Its function is as follows. A broad-specificity exonuclease, capable of degrading both structure-specific DNA and RNA targets without sequence specificity in vitro. Requires two to five unpaired nucleotides in the 3' region for efficient binding and nuclease activity. Binds with higher affinity to RNA and DNA stem-loop substrates compared to single-stranded substrate. Binds to the 3'-end of histone mRNAs and degrades them, suggesting that it might play a role in histone mRNA decay after replication. Can readily cleave the histone stem-loop RNA beyond the -12 (UUU) position in the loop to produce -14 and then -16 oligonucleotide fragments for both the stem-loop and the reverse stem-loop. Cleaves both the single-stranded 3' flank as well as the double-stranded stem portion of histone stem-loop RNA. Might affect histone mRNA 3' processing thereby regulating histone protein expression. Has an important role in development and tissue formation. Might have a role in 5.8S rRNA precursor processing. In Drosophila melanogaster (Fruit fly), this protein is 3'-5' exonuclease Snipper.